Here is a 152-residue protein sequence, read N- to C-terminus: TOMM20-like protein 1 (152 aa).

Residues 1 to 6 are Mitochondrial intermembrane-facing; that stretch reads MPSVRL. The helical transmembrane segment at 7–27 threads the bilayer; the sequence is GVGLLAGLAAGGAVVLLSYCV. Over 28–152 the chain is Cytoplasmic; that stretch reads YLDWRRHRDP…STEHLKDDPD (125 aa).

The protein belongs to the Tom20 family.

It is found in the mitochondrion outer membrane. In Mus musculus (Mouse), this protein is TOMM20-like protein 1 (Tomm20l).